We begin with the raw amino-acid sequence, 359 residues long: Mannonate dehydratase (359 aa).

Belongs to the mannonate dehydratase family. The cofactor is Fe(2+). Mn(2+) serves as cofactor.

The catalysed reaction is D-mannonate = 2-dehydro-3-deoxy-D-gluconate + H2O. The protein operates within carbohydrate metabolism; pentose and glucuronate interconversion. Functionally, catalyzes the dehydration of D-mannonate. This chain is Mannonate dehydratase (uxuA), found in Bacillus subtilis (strain 168).